Reading from the N-terminus, the 134-residue chain is Transcription antitermination protein NusB (134 aa).

Belongs to the NusB family.

In terms of biological role, involved in transcription antitermination. Required for transcription of ribosomal RNA (rRNA) genes. Binds specifically to the boxA antiterminator sequence of the ribosomal RNA (rrn) operons. This chain is Transcription antitermination protein NusB, found in Shewanella amazonensis (strain ATCC BAA-1098 / SB2B).